The sequence spans 339 residues: MAKRHLTRRQSWRIEKIQEERAARAARRESRAVEELEGGDLGPEQTGQVIAHFGVQVEVESADGQVSRCHLRANLPALVTGDQVVWRAGNQGIGVIVAQLPRRSELCRPDMRGLLKPVAANVDRIVIVFAPRPEPHANLIDRYLIAAEHAGIQPLLLLNKADLVDESNAEGIDALLNVYRTLGYPLIEVSAFNGLAMDELRGALDGHVSVFVGQSGVGKSSLVNALLPGVDTRVGDLSTVTGKGTHTTTTARLFHFPGGGDLIDSPGIREFGLGHVSRDDVEAGFIEFRDLLGHCRFRDCKHDREPGCALLQALEDGRIMPQRMASYRHILASMPETDY.

In terms of domain architecture, CP-type G spans 111–271 (MRGLLKPVAA…LIDSPGIREF (161 aa)). GTP is bound by residues 159–162 (NKAD) and 213–221 (GQSGVGKSS). Zn(2+) is bound by residues C295, C300, H302, and C308.

Belongs to the TRAFAC class YlqF/YawG GTPase family. RsgA subfamily. Monomer. Associates with 30S ribosomal subunit, binds 16S rRNA. Zn(2+) is required as a cofactor.

It localises to the cytoplasm. In terms of biological role, one of several proteins that assist in the late maturation steps of the functional core of the 30S ribosomal subunit. Helps release RbfA from mature subunits. May play a role in the assembly of ribosomal proteins into the subunit. Circularly permuted GTPase that catalyzes slow GTP hydrolysis, GTPase activity is stimulated by the 30S ribosomal subunit. The protein is Small ribosomal subunit biogenesis GTPase RsgA of Pseudomonas aeruginosa (strain ATCC 15692 / DSM 22644 / CIP 104116 / JCM 14847 / LMG 12228 / 1C / PRS 101 / PAO1).